The sequence spans 492 residues: GTPase Der (492 aa).

Residues 3-166 (PVIALVGRPN…AVLGIFPKDA (164 aa)) enclose the EngA-type G 1 domain. Residues 9–16 (GRPNVGKS), 56–60 (DTGGI), and 118–121 (NKVD) contribute to the GTP site. The interval 166–190 (AGEPEEGAEAEEEVQEGQEAKRIPG) is disordered. Residues 168-181 (EPEEGAEAEEEVQE) are compositionally biased toward acidic residues. An EngA-type G 2 domain is found at 197–370 (IKLAIIGRPN…SVQAAFHSAV (174 aa)). GTP-binding positions include 203–210 (GRPNVGKS), 250–254 (DTAGV), and 315–318 (NKWD). Residues 371–455 (TRWPTSRLTQ…PIRIEYKGGE (85 aa)) enclose the KH-like domain. The interval 453 to 492 (GGENPYEGNKNKLTDRQVNKKRRLMSHHKKAEKKRKDKRK) is disordered. Over residues 461–470 (NKNKLTDRQV) the composition is skewed to basic and acidic residues. A compositionally biased stretch (basic residues) spans 471–492 (NKKRRLMSHHKKAEKKRKDKRK).

It belongs to the TRAFAC class TrmE-Era-EngA-EngB-Septin-like GTPase superfamily. EngA (Der) GTPase family. In terms of assembly, associates with the 50S ribosomal subunit.

Its function is as follows. GTPase that plays an essential role in the late steps of ribosome biogenesis. The protein is GTPase Der of Ectopseudomonas mendocina (strain ymp) (Pseudomonas mendocina).